The sequence spans 1435 residues: DNA polymerase III PolC-type (1435 aa).

The Exonuclease domain occupies 404–562 (YVVYDIETTG…YDSSVLTNIF (159 aa)).

It belongs to the DNA polymerase type-C family. PolC subfamily.

Its subcellular location is the cytoplasm. The catalysed reaction is DNA(n) + a 2'-deoxyribonucleoside 5'-triphosphate = DNA(n+1) + diphosphate. In terms of biological role, required for replicative DNA synthesis. This DNA polymerase also exhibits 3' to 5' exonuclease activity. This Mycoplasmopsis pulmonis (strain UAB CTIP) (Mycoplasma pulmonis) protein is DNA polymerase III PolC-type.